We begin with the raw amino-acid sequence, 241 residues long: uncharacterized protein (241 aa).

Residues 78-80 (TSA), glycine 111, isoleucine 131, and 138-140 (SSL) each bind S-adenosyl-L-methionine.

The protein belongs to the class IV-like SAM-binding methyltransferase superfamily. RNA methyltransferase TrmH family.

This is an uncharacterized protein from Haemophilus influenzae (strain ATCC 51907 / DSM 11121 / KW20 / Rd).